The following is a 295-amino-acid chain: MVRRLTSPRLEFEAAAIYEYPEHLHSFLNDLPTRPGVYLFHGESDTMPLYIGKSVNIRSRVLSHLRTPDEAAMLRQSRRISWICTAGEIGALLLEARLIKEQQPLFNKRLRRNRQLCALQLNEKRVDVVYAKEVDFSRAPNLFGLFANRRAALQALQSIADEQKLCYGLLGLEPLSRGRACFRSALKRCAGACCGKESHEEHALRLRQSLERLRVVCWPWQGAVALKEQHPEMTQYHIIQNWLWLGAVNSLEEATTLIRTPAGFDHDGYKILCKPLLSGNYEITELDPANDQRAS.

One can recognise a GIY-YIG domain in the interval T33–K108.

Functionally, incises the DNA at the 3' side of a lesion during nucleotide excision repair. Incises the DNA farther away from the lesion than UvrC. Not able to incise the 5' site of a lesion. When a lesion remains because UvrC is not able to induce the 3' incision, Cho incises the DNA. Then UvrC makes the 5' incision. The combined action of Cho and UvrC broadens the substrate range of nucleotide excision repair. This is Excinuclease cho (cho) from Shigella flexneri.